A 139-amino-acid polypeptide reads, in one-letter code: Putative nickel-responsive regulator (139 aa).

Ni(2+) is bound by residues histidine 79, histidine 90, histidine 92, and cysteine 98.

This sequence belongs to the transcriptional regulatory CopG/NikR family. Ni(2+) is required as a cofactor.

Its function is as follows. Transcriptional regulator. The chain is Putative nickel-responsive regulator from Geobacter metallireducens (strain ATCC 53774 / DSM 7210 / GS-15).